A 90-amino-acid chain; its full sequence is RNA-binding protein Hfq (90 aa).

Residues glutamate 9 to valine 68 form the Sm domain.

It belongs to the Hfq family. As to quaternary structure, homohexamer.

RNA chaperone that binds small regulatory RNA (sRNAs) and mRNAs to facilitate mRNA translational regulation in response to envelope stress, environmental stress and changes in metabolite concentrations. Also binds with high specificity to tRNAs. The sequence is that of RNA-binding protein Hfq from Halorhodospira halophila (strain DSM 244 / SL1) (Ectothiorhodospira halophila (strain DSM 244 / SL1)).